Consider the following 415-residue polypeptide: 3-isopropylmalate dehydratase large subunit (415 aa).

The [4Fe-4S] cluster site is built by Cys297, Cys355, and Cys358.

Belongs to the aconitase/IPM isomerase family. LeuC type 2 subfamily. Heterodimer of LeuC and LeuD. [4Fe-4S] cluster serves as cofactor.

It carries out the reaction (2R,3S)-3-isopropylmalate = (2S)-2-isopropylmalate. It functions in the pathway amino-acid biosynthesis; L-leucine biosynthesis; L-leucine from 3-methyl-2-oxobutanoate: step 2/4. Functionally, catalyzes the isomerization between 2-isopropylmalate and 3-isopropylmalate, via the formation of 2-isopropylmaleate. This chain is 3-isopropylmalate dehydratase large subunit, found in Sulfurisphaera tokodaii (strain DSM 16993 / JCM 10545 / NBRC 100140 / 7) (Sulfolobus tokodaii).